An 899-amino-acid chain; its full sequence is UPF0182 protein Mhun_1303 (899 aa).

A run of 7 helical transmembrane segments spans residues 6 to 26 (LLIFIPAAVILLFFLLTDLLS), 39 to 59 (VFLTILITSAALFVIGTLLFF), 93 to 113 (VAAGITGLSLSSSWEIILAFL), 136 to 156 (LPFYTILIQYLLALFVFTLII), 196 to 216 (FLPQVNCLLFLIFTTLAAFLW), 240 to 260 (ITIPALTILTVIAFLIGLLFL), and 271 to 291 (IAYGIGGFFIIAILSAGAGFL).

Belongs to the UPF0182 family.

It is found in the cell membrane. This Methanospirillum hungatei JF-1 (strain ATCC 27890 / DSM 864 / NBRC 100397 / JF-1) protein is UPF0182 protein Mhun_1303.